The sequence spans 89 residues: UPF0237 protein Cgl1544/cg1742 (89 aa).

Residues 4–82 (IMTVTGQDHT…LVIRIQSEAL (79 aa)) form the ACT domain.

Belongs to the UPF0237 family.

The chain is UPF0237 protein Cgl1544/cg1742 from Corynebacterium glutamicum (strain ATCC 13032 / DSM 20300 / JCM 1318 / BCRC 11384 / CCUG 27702 / LMG 3730 / NBRC 12168 / NCIMB 10025 / NRRL B-2784 / 534).